The following is a 182-amino-acid chain: Small ribosomal subunit protein uS4c (182 aa).

The tract at residues 8-36 (LGALPGLTSKRPGSGSDPKNKSRSGKRSQ) is disordered. Residues 82–143 (MRLDNILFRL…KQRSKALIQN (62 aa)) form the S4 RNA-binding domain.

Belongs to the universal ribosomal protein uS4 family. Part of the 30S ribosomal subunit. Contacts protein S5. The interaction surface between S4 and S5 is involved in control of translational fidelity.

Its subcellular location is the plastid. It is found in the chloroplast. One of the primary rRNA binding proteins, it binds directly to 16S rRNA where it nucleates assembly of the body of the 30S subunit. In terms of biological role, with S5 and S12 plays an important role in translational accuracy. The chain is Small ribosomal subunit protein uS4c (rps4) from Dietes robinsoniana (Lord Howe wedding lily).